The chain runs to 183 residues: Nucleoside triphosphate pyrophosphatase (183 aa).

The Proton acceptor role is filled by Asp71.

The protein belongs to the Maf family. It depends on a divalent metal cation as a cofactor.

The protein resides in the cytoplasm. The enzyme catalyses a ribonucleoside 5'-triphosphate + H2O = a ribonucleoside 5'-phosphate + diphosphate + H(+). The catalysed reaction is a 2'-deoxyribonucleoside 5'-triphosphate + H2O = a 2'-deoxyribonucleoside 5'-phosphate + diphosphate + H(+). Its function is as follows. Nucleoside triphosphate pyrophosphatase. May have a dual role in cell division arrest and in preventing the incorporation of modified nucleotides into cellular nucleic acids. The protein is Nucleoside triphosphate pyrophosphatase of Campylobacter jejuni subsp. jejuni serotype O:2 (strain ATCC 700819 / NCTC 11168).